A 347-amino-acid polypeptide reads, in one-letter code: D-fructose 1,6-bisphosphatase class 2/sedoheptulose 1,7-bisphosphatase (347 aa).

Aspartate 33, glutamate 57, aspartate 97, and glutamate 100 together coordinate Mn(2+). Substrate is bound by residues 100–102 (EGT), tyrosine 131, 176–178 (RDR), and 198–200 (DGD). Glutamate 225 is a Mn(2+) binding site.

The protein belongs to the FBPase class 2 family. In terms of assembly, homotetramer. Requires Mn(2+) as cofactor.

It catalyses the reaction beta-D-fructose 1,6-bisphosphate + H2O = beta-D-fructose 6-phosphate + phosphate. The enzyme catalyses D-sedoheptulose 1,7-bisphosphate + H2O = D-sedoheptulose 7-phosphate + phosphate. It participates in carbohydrate biosynthesis; Calvin cycle. Functionally, catalyzes the hydrolysis of fructose 1,6-bisphosphate (Fru 1,6-P2) and sedoheptulose 1,7-bisphosphate (Sed 1,7-P2) to fructose 6-phosphate and sedoheptulose 7-phosphate, respectively. The protein is D-fructose 1,6-bisphosphatase class 2/sedoheptulose 1,7-bisphosphatase of Thermosynechococcus vestitus (strain NIES-2133 / IAM M-273 / BP-1).